The primary structure comprises 110 residues: Large ribosomal subunit protein uL22 (110 aa).

This sequence belongs to the universal ribosomal protein uL22 family. Part of the 50S ribosomal subunit.

Its function is as follows. This protein binds specifically to 23S rRNA; its binding is stimulated by other ribosomal proteins, e.g. L4, L17, and L20. It is important during the early stages of 50S assembly. It makes multiple contacts with different domains of the 23S rRNA in the assembled 50S subunit and ribosome. Functionally, the globular domain of the protein is located near the polypeptide exit tunnel on the outside of the subunit, while an extended beta-hairpin is found that lines the wall of the exit tunnel in the center of the 70S ribosome. In Pseudomonas savastanoi pv. phaseolicola (strain 1448A / Race 6) (Pseudomonas syringae pv. phaseolicola (strain 1448A / Race 6)), this protein is Large ribosomal subunit protein uL22.